The sequence spans 693 residues: Polyribonucleotide nucleotidyltransferase (693 aa).

Aspartate 486 and aspartate 492 together coordinate Mg(2+). Residues 553 to 612 (PRFTTLKIHPDKIRDVIGKGGATIRALTEETGTSIDISDDGTVKIASVDKAAGDEARRRI) form the KH domain. In terms of domain architecture, S1 motif spans 622–690 (GRIYEGRVVK…KQGRIRLSMK (69 aa)).

Belongs to the polyribonucleotide nucleotidyltransferase family. Component of the RNA degradosome, which is a multiprotein complex involved in RNA processing and mRNA degradation. Mg(2+) is required as a cofactor.

The protein localises to the cytoplasm. The catalysed reaction is RNA(n+1) + phosphate = RNA(n) + a ribonucleoside 5'-diphosphate. In terms of biological role, involved in mRNA degradation. Catalyzes the phosphorolysis of single-stranded polyribonucleotides processively in the 3'- to 5'-direction. The polypeptide is Polyribonucleotide nucleotidyltransferase (Thioalkalivibrio sulfidiphilus (strain HL-EbGR7)).